Consider the following 196-residue polypeptide: Putative AAA family ATPase L572 (196 aa).

32-39 is an ATP binding site; it reads NAVNCKET.

It belongs to the AAA ATPase family.

In Acanthamoeba polyphaga mimivirus (APMV), this protein is Putative AAA family ATPase L572.